The sequence spans 385 residues: Palmitoyl-[acyl-carrier-protein] 4-desaturase, chloroplastic (385 aa).

The transit peptide at 1 to 36 directs the protein to the chloroplast; that stretch reads MAMKLNALMTLQCPKRNMFTRIAPPQAGRVRSKVSM. The Fe cation site is built by Glu-126, Glu-164, His-167, Glu-217, Glu-250, and His-253.

Belongs to the fatty acid desaturase type 2 family. In terms of assembly, homodimer. It depends on Fe(2+) as a cofactor. Found only in tissues which synthesize petroselinic acid, such as developing seeds.

The protein resides in the plastid. It is found in the chloroplast. The enzyme catalyses hexadecanoyl-[ACP] + 2 reduced [2Fe-2S]-[ferredoxin] + O2 + 2 H(+) = (4Z)-hexadecenoyl-[ACP] + 2 oxidized [2Fe-2S]-[ferredoxin] + 2 H2O. Its function is as follows. Converts palmitoyl-ACP to (4Z)-hexadec-4-enoyl-ACP by introduction of a cis double bond between carbons 4 and 5 of the acyl chain. In Coriandrum sativum (Coriander), this protein is Palmitoyl-[acyl-carrier-protein] 4-desaturase, chloroplastic.